The following is a 242-amino-acid chain: MIVFPAVDIKDGVCVRLSQGQADAVTVFSSDPVAQAKYWETQGARYLHVVDLDGAFSGMPKNFELIRDICSQLSIPVQLGGGIRDIETASKYLEAGVRRLIIGTMALEDEETFAELCAKFPGQIGVSLDAVNGQLKSRGWVEDAGITVFDIIPRIEAAGAAFIIYTDISRDGMQTGVNVMALSELCSKTKLPVIAAGGVATLEDVINLQPLVSKGLEGAVSGQAIYTGTLNFAEAMEWIENN.

Asp8 (proton acceptor) is an active-site residue. The active-site Proton donor is Asp129.

It belongs to the HisA/HisF family.

The protein localises to the cytoplasm. The enzyme catalyses 1-(5-phospho-beta-D-ribosyl)-5-[(5-phospho-beta-D-ribosylamino)methylideneamino]imidazole-4-carboxamide = 5-[(5-phospho-1-deoxy-D-ribulos-1-ylimino)methylamino]-1-(5-phospho-beta-D-ribosyl)imidazole-4-carboxamide. It participates in amino-acid biosynthesis; L-histidine biosynthesis; L-histidine from 5-phospho-alpha-D-ribose 1-diphosphate: step 4/9. This chain is 1-(5-phosphoribosyl)-5-[(5-phosphoribosylamino)methylideneamino] imidazole-4-carboxamide isomerase, found in Maridesulfovibrio salexigens (strain ATCC 14822 / DSM 2638 / NCIMB 8403 / VKM B-1763) (Desulfovibrio salexigens).